The sequence spans 440 residues: Elongation factor 1-gamma (440 aa).

The residue at position 2 (Ala-2) is an N-acetylalanine. In terms of domain architecture, GST N-terminal spans 2–87 (AAGTLYTYPE…YVSNEELRGS (86 aa)). One can recognise a GST C-terminal domain in the interval 88-216 (TPEAAAQVVQ…VKLCEKMAQF (129 aa)). N6-acetyllysine is present on residues Lys-147 and Lys-212. A compositionally biased stretch (basic and acidic residues) spans 221–257 (FAESQPKKDTPRKEKGSREEKLKPQAERKEGKEEKKA). The segment at 221-267 (FAESQPKKDTPRKEKGSREEKLKPQAERKEGKEEKKAAAPAPEEELD) is disordered. A Glycyl lysine isopeptide (Lys-Gly) (interchain with G-Cter in SUMO1) cross-link involves residue Lys-256. Residues 279 to 440 (AKDPFAHLPK…KAFNQGKIFK (162 aa)) enclose the EF-1-gamma C-terminal domain. Lys-288 is covalently cross-linked (Glycyl lysine isopeptide (Lys-Gly) (interchain with G-Cter in SUMO2)). The residue at position 404 (Lys-404) is an N6-acetyllysine. Lys-437 bears the N6-acetyllysine; alternate mark. Lys-437 is modified (N6-malonyllysine; alternate).

In terms of assembly, EF-1 is composed of four subunits: alpha, beta, delta, and gamma.

Its function is as follows. Probably plays a role in anchoring the complex to other cellular components. This chain is Elongation factor 1-gamma (EEF1G), found in Bos taurus (Bovine).